The following is a 212-amino-acid chain: Thiamine-phosphate synthase (212 aa).

Residues 39-43 and Asn71 each bind 4-amino-2-methyl-5-(diphosphooxymethyl)pyrimidine; that span reads QLREK. Mg(2+)-binding residues include Asp72 and Asp91. Ser110 serves as a coordination point for 4-amino-2-methyl-5-(diphosphooxymethyl)pyrimidine. 137 to 139 provides a ligand contact to 2-[(2R,5Z)-2-carboxy-4-methylthiazol-5(2H)-ylidene]ethyl phosphate; sequence TPT. 4-amino-2-methyl-5-(diphosphooxymethyl)pyrimidine is bound at residue Lys140. Gly168 is a 2-[(2R,5Z)-2-carboxy-4-methylthiazol-5(2H)-ylidene]ethyl phosphate binding site.

Belongs to the thiamine-phosphate synthase family. Mg(2+) serves as cofactor.

The enzyme catalyses 2-[(2R,5Z)-2-carboxy-4-methylthiazol-5(2H)-ylidene]ethyl phosphate + 4-amino-2-methyl-5-(diphosphooxymethyl)pyrimidine + 2 H(+) = thiamine phosphate + CO2 + diphosphate. The catalysed reaction is 2-(2-carboxy-4-methylthiazol-5-yl)ethyl phosphate + 4-amino-2-methyl-5-(diphosphooxymethyl)pyrimidine + 2 H(+) = thiamine phosphate + CO2 + diphosphate. It carries out the reaction 4-methyl-5-(2-phosphooxyethyl)-thiazole + 4-amino-2-methyl-5-(diphosphooxymethyl)pyrimidine + H(+) = thiamine phosphate + diphosphate. The protein operates within cofactor biosynthesis; thiamine diphosphate biosynthesis; thiamine phosphate from 4-amino-2-methyl-5-diphosphomethylpyrimidine and 4-methyl-5-(2-phosphoethyl)-thiazole: step 1/1. Functionally, condenses 4-methyl-5-(beta-hydroxyethyl)thiazole monophosphate (THZ-P) and 2-methyl-4-amino-5-hydroxymethyl pyrimidine pyrophosphate (HMP-PP) to form thiamine monophosphate (TMP). The chain is Thiamine-phosphate synthase from Acidothermus cellulolyticus (strain ATCC 43068 / DSM 8971 / 11B).